The following is a 280-amino-acid chain: Probable endonuclease 4 (280 aa).

His-69, His-109, Glu-145, Asp-179, His-182, His-216, Asp-229, His-231, and Glu-261 together coordinate Zn(2+).

It belongs to the AP endonuclease 2 family. Zn(2+) serves as cofactor.

The catalysed reaction is Endonucleolytic cleavage to 5'-phosphooligonucleotide end-products.. Its function is as follows. Endonuclease IV plays a role in DNA repair. It cleaves phosphodiester bonds at apurinic or apyrimidinic (AP) sites, generating a 3'-hydroxyl group and a 5'-terminal sugar phosphate. This is Probable endonuclease 4 from Erwinia tasmaniensis (strain DSM 17950 / CFBP 7177 / CIP 109463 / NCPPB 4357 / Et1/99).